Reading from the N-terminus, the 599-residue chain is DNA primase (599 aa).

The segment at 40 to 64 (CPFHGENTPSFSVSPDKQLYHCFGC) adopts a CHC2-type zinc-finger fold. A Toprim domain is found at 259–342 (NEAVLFEGYV…KVAMIPDGLD (84 aa)). Residues Glu-265, Asp-309, and Asp-311 each coordinate Mg(2+).

The protein belongs to the DnaG primase family. In terms of assembly, monomer. Interacts with DnaB. Requires Zn(2+) as cofactor. Mg(2+) is required as a cofactor.

It carries out the reaction ssDNA + n NTP = ssDNA/pppN(pN)n-1 hybrid + (n-1) diphosphate.. Functionally, RNA polymerase that catalyzes the synthesis of short RNA molecules used as primers for DNA polymerase during DNA replication. This chain is DNA primase, found in Halalkalibacterium halodurans (strain ATCC BAA-125 / DSM 18197 / FERM 7344 / JCM 9153 / C-125) (Bacillus halodurans).